A 202-amino-acid chain; its full sequence is MPEVEVDNNNEKPSEINSFHHMIISSSKNVLKMEEVEVSKKRKFQTDQSDELSLLPLSKHTCFANVACSENTNGNSEIDTEYSMSSYVNSTTSMECNNDIEMKEESSGSCGEDKMISFESHLDYIYGTQNLEDFSEKVIENILYLDEQEEEEEDAKGCSSNAAKFVLSSGRWTVNQDDSTLHETKKPTIDQEFEQYFSTLML.

At Ser-39 the chain carries Phosphoserine. A Nuclear localization sequence (NLS) motif is present at residues 40–43; that stretch reads KKRK. A Nuclear export sequence (NES) motif is present at residues 54–57; it reads LLPL. At Thr-61 the chain carries Phosphothreonine.

This sequence belongs to the FHY1 protein family. In terms of assembly, homodimer and heterodimer with FHL. Interacts with underphosphorylated PHYA, especially upon far-red (FR) light illumination. Binds to LAF1 and HFR1. Forms PHYA/FHY1/HFR1 complex in darkness but dissociates from PHYA and HFR1 in response to continuous FR light (FRc). Inactivated by rapid reversible PHYA-mediated phosphorylation at Ser-39 and Thr-61 in red light (R), thus inhibiting PHYA signaling in a negative feedback loop; this ensures the seedling deetiolation process in response to a R-enriched light condition. Subsequent exposure to far-red light (FR) after the R conditions leads to dephosphorylation. The phosphorylated form is cytoplasmic only and unable to bind to chromatin at direct target genes whereas the unphosphorylated form can shuttle from cytoplasm to nucleus. As to expression, expressed in hypocotyl cells of etiolated plants.

Its subcellular location is the nucleus. It localises to the cytoplasm. Functionally, key regulator of far red / red (FR/R) spectrum-specific responses essential for the adaption to changing light conditions (e.g. de-etiolation), essentially by regulating PHYA shuttling from the cytoplasm to the nucleus and by directly regulating the expression of some target genes, depending on light conditions and phosphorylation status. Binds chromatin at target genes promoters, especially in FR light conditions. Can activate transcription of different genes, some being in a phytochrome A (PHYA)-dependent and other in a PHYA-independent manners. Controls specific aspects of plant development, such as the inhibition of seed germination under FR during salt stress. Essential for light-regulated PHYA nuclear accumulation and subsequent PHYA phototropic signaling processes involved in photomorphogenesis. Mediates the association of PHYA with HFR1 and LAF1 in the nucleus in response to FR conditions. PHYA-specific signal transducer in response to continuous FR lights. Contributes to inhibition of hypocotyl elongation in continuous blue light (B). The polypeptide is Protein FAR-RED ELONGATED HYPOCOTYL 1 (Arabidopsis thaliana (Mouse-ear cress)).